Here is a 320-residue protein sequence, read N- to C-terminus: 3-ketodihydrosphingosine reductase TSC10 (320 aa).

Residues 1–254 are Cytoplasmic-facing; sequence MKFTLEDQVV…IIAKSLARGD (254 aa). Leu-11 serves as a coordination point for NADP(+). NADPH-binding residues include Gly-14, Ser-16, and Gly-18. A GXSXG motif is present at residues 14 to 18; it reads GGSQG. Residue Leu-19 coordinates NADP(+). NADPH is bound by residues Arg-41, Arg-45, Asp-89, and Leu-90. Asp-89 provides a ligand contact to NADP(+). Ser-166 acts as the Proton donor in catalysis. Positions 180, 184, and 213 each coordinate NADP(+). The active-site Proton acceptor is the Tyr-180. Catalysis depends on Lys-184, which acts as the Lowers pKa of active site Tyr. The helical transmembrane segment at 255 to 275 threads the bilayer; it reads DDVFTDFVGWMIMGMDLGLTA. Over 276–279 the chain is Lumenal; the sequence is KKSR. The helical transmembrane segment at 280-300 threads the bilayer; it reads FVPLQWIFGVLSNILVVPFYM. The Cytoplasmic portion of the chain corresponds to 301–320; it reads VGCSWYIRKWFRENDGKKAN.

This sequence belongs to the short-chain dehydrogenases/reductases (SDR) family. Dimer or tetramer.

The protein resides in the endoplasmic reticulum membrane. The catalysed reaction is sphinganine + NADP(+) = 3-oxosphinganine + NADPH + H(+). The protein operates within lipid metabolism; sphingolipid metabolism. Functionally, catalyzes the reduction of 3'-oxosphinganine (3-ketodihydrosphingosine/KDS) to sphinganine (dihydrosphingosine/DHS), the second step of de novo sphingolipid biosynthesis. The protein is 3-ketodihydrosphingosine reductase TSC10 of Saccharomyces cerevisiae (strain ATCC 204508 / S288c) (Baker's yeast).